The chain runs to 228 residues: Histone H1-III (228 aa).

Over residues 1–18 (MSDPAPEVASAVPVASPA) the composition is skewed to low complexity. 2 disordered regions span residues 1-44 (MSDP…PPVS) and 98-228 (LQTK…AKKA). The H15 domain maps to 39 to 113 (THPPVSEMVV…GASGSFKLPA (75 aa)). Over residues 115–133 (AKKEKVAKTPKKAAGEKKP) the composition is skewed to basic and acidic residues. Composition is skewed to basic residues over residues 148 to 170 (SIAK…KSTK) and 178 to 209 (AAKK…KVAA). Residues 211–221 (KPAEKKPEAAK) are compositionally biased toward basic and acidic residues.

It belongs to the histone H1/H5 family.

Its subcellular location is the nucleus. The protein resides in the chromosome. In terms of biological role, histones H1 are necessary for the condensation of nucleosome chains into higher-order structures. This Glyptotendipes barbipes (Midge) protein is Histone H1-III.